Here is a 328-residue protein sequence, read N- to C-terminus: GMP reductase (328 aa).

Cys-176 serves as the catalytic Thioimidate intermediate. NADP(+) is bound at residue 205 to 228 (IIADGGIRTHGDIAKSIRFGASMI).

Belongs to the IMPDH/GMPR family. GuaC type 2 subfamily.

The enzyme catalyses IMP + NH4(+) + NADP(+) = GMP + NADPH + 2 H(+). Functionally, catalyzes the irreversible NADPH-dependent deamination of GMP to IMP. It functions in the conversion of nucleobase, nucleoside and nucleotide derivatives of G to A nucleotides, and in maintaining the intracellular balance of A and G nucleotides. The chain is GMP reductase from Streptococcus pneumoniae (strain CGSP14).